A 291-amino-acid chain; its full sequence is Meteorin (291 aa).

The first 21 residues, 1 to 21, serve as a signal peptide directing secretion; the sequence is MLVAALLCALCCGLLAASARA. 5 disulfides stabilise this stretch: Cys28–Cys49, Cys80–Cys116, Cys169–Cys240, Cys172–Cys264, and Cys182–Cys286.

This sequence belongs to the meteorin family. In terms of assembly, monomer.

The protein resides in the secreted. Functionally, involved in both glial cell differentiation and axonal network formation during neurogenesis. Promotes astrocyte differentiation and transforms cerebellar astrocytes into radial glia. Also induces axonal extension in small and intermediate neurons of sensory ganglia by activating nearby satellite glia. In Rattus norvegicus (Rat), this protein is Meteorin (Metrn).